Reading from the N-terminus, the 878-residue chain is Valine--tRNA ligase (878 aa).

Positions 45 to 55 (PNVTGQLHMGH) match the 'HIGH' region motif. The 'KMSKS' region motif lies at 524-528 (KMSKS). An ATP-binding site is contributed by Lys527. The stretch at 804-871 (PLKDLIDLEK…REKEVLEQRI (68 aa)) forms a coiled coil.

Belongs to the class-I aminoacyl-tRNA synthetase family. ValS type 1 subfamily. As to quaternary structure, monomer.

Its subcellular location is the cytoplasm. The enzyme catalyses tRNA(Val) + L-valine + ATP = L-valyl-tRNA(Val) + AMP + diphosphate. In terms of biological role, catalyzes the attachment of valine to tRNA(Val). As ValRS can inadvertently accommodate and process structurally similar amino acids such as threonine, to avoid such errors, it has a 'posttransfer' editing activity that hydrolyzes mischarged Thr-tRNA(Val) in a tRNA-dependent manner. This chain is Valine--tRNA ligase, found in Carboxydothermus hydrogenoformans (strain ATCC BAA-161 / DSM 6008 / Z-2901).